The primary structure comprises 43 residues: Protein PsbN (43 aa).

Residues 4–24 (AIVLIISVGAALVAVTGYGIY) form a helical membrane-spanning segment.

It belongs to the PsbN family.

The protein localises to the cellular thylakoid membrane. In terms of biological role, may play a role in photosystem I and II biogenesis. In Trichormus variabilis (strain ATCC 29413 / PCC 7937) (Anabaena variabilis), this protein is Protein PsbN.